A 216-amino-acid polypeptide reads, in one-letter code: ATP-dependent Clp protease proteolytic subunit (216 aa).

Serine 101 functions as the Nucleophile in the catalytic mechanism. The active site involves histidine 126.

It belongs to the peptidase S14 family. In terms of assembly, component of the chloroplastic Clp protease core complex.

It localises to the plastid. The protein resides in the chloroplast stroma. It catalyses the reaction Hydrolysis of proteins to small peptides in the presence of ATP and magnesium. alpha-casein is the usual test substrate. In the absence of ATP, only oligopeptides shorter than five residues are hydrolyzed (such as succinyl-Leu-Tyr-|-NHMec, and Leu-Tyr-Leu-|-Tyr-Trp, in which cleavage of the -Tyr-|-Leu- and -Tyr-|-Trp bonds also occurs).. Its function is as follows. Cleaves peptides in various proteins in a process that requires ATP hydrolysis. Has a chymotrypsin-like activity. Plays a major role in the degradation of misfolded proteins. The protein is ATP-dependent Clp protease proteolytic subunit of Saccharum hybrid (Sugarcane).